Reading from the N-terminus, the 119-residue chain is Large ribosomal subunit protein bL20 (119 aa).

It belongs to the bacterial ribosomal protein bL20 family.

Binds directly to 23S ribosomal RNA and is necessary for the in vitro assembly process of the 50S ribosomal subunit. It is not involved in the protein synthesizing functions of that subunit. The chain is Large ribosomal subunit protein bL20 from Gloeobacter violaceus (strain ATCC 29082 / PCC 7421).